The sequence spans 504 residues: ATP synthase subunit alpha (504 aa).

169-176 (GDRQTGKT) provides a ligand contact to ATP.

It belongs to the ATPase alpha/beta chains family. F-type ATPases have 2 components, CF(1) - the catalytic core - and CF(0) - the membrane proton channel. CF(1) has five subunits: alpha(3), beta(3), gamma(1), delta(1), epsilon(1). CF(0) has three main subunits: a(1), b(2) and c(9-12). The alpha and beta chains form an alternating ring which encloses part of the gamma chain. CF(1) is attached to CF(0) by a central stalk formed by the gamma and epsilon chains, while a peripheral stalk is formed by the delta and b chains.

It is found in the cell membrane. It carries out the reaction ATP + H2O + 4 H(+)(in) = ADP + phosphate + 5 H(+)(out). In terms of biological role, produces ATP from ADP in the presence of a proton gradient across the membrane. The alpha chain is a regulatory subunit. In Clostridium botulinum (strain Alaska E43 / Type E3), this protein is ATP synthase subunit alpha.